The primary structure comprises 314 residues: Quinolinate synthase (314 aa).

His-27 and Ser-44 together coordinate iminosuccinate. Position 89 (Cys-89) interacts with [4Fe-4S] cluster. Residues 115–117 (YIN) and Ser-132 each bind iminosuccinate. Position 175 (Cys-175) interacts with [4Fe-4S] cluster. Iminosuccinate contacts are provided by residues 201 to 203 (HPE) and Thr-218. A [4Fe-4S] cluster-binding site is contributed by Cys-271.

The protein belongs to the quinolinate synthase family. Type 2 subfamily. Requires [4Fe-4S] cluster as cofactor.

The protein resides in the cytoplasm. It catalyses the reaction iminosuccinate + dihydroxyacetone phosphate = quinolinate + phosphate + 2 H2O + H(+). It participates in cofactor biosynthesis; NAD(+) biosynthesis; quinolinate from iminoaspartate: step 1/1. In terms of biological role, catalyzes the condensation of iminoaspartate with dihydroxyacetone phosphate to form quinolinate. The polypeptide is Quinolinate synthase (Ehrlichia chaffeensis (strain ATCC CRL-10679 / Arkansas)).